A 124-amino-acid polypeptide reads, in one-letter code: Fluoride-specific ion channel FluC 1 (124 aa).

The next 4 membrane-spanning stretches (helical) occupy residues 7–27 (ALTLAAAGAGSVLRYLLGGWV), 35–55 (FPWGTLAVNALGCLGLGLLQG), 63–83 (LLLVLGSGLLAGFTTFSTLML), and 101–121 (IVGTLALGLFALSAGARAGAW).

This sequence belongs to the fluoride channel Fluc/FEX (TC 1.A.43) family.

It localises to the cell membrane. The catalysed reaction is fluoride(in) = fluoride(out). Fluoride-specific ion channel. Important for reducing fluoride concentration in the cell, thus reducing its toxicity. The chain is Fluoride-specific ion channel FluC 1 from Rubrobacter xylanophilus (strain DSM 9941 / JCM 11954 / NBRC 16129 / PRD-1).